Reading from the N-terminus, the 165-residue chain is MYCPFCSANDTKVIDSRLVSDGHQVRRRRECLACHERYTTFESAELVMPRIIKRDGSREPFNEDKMLSGLTRALEKRPVSMEQIELAVNKLKSQMRATGEREISSEMLGDLIMAQLKELDKVAYLRFASVYLSFEDISEFADEITRLGKEKNGKAKKAKPAKTAK.

Residues 3–34 (CPFCSANDTKVIDSRLVSDGHQVRRRRECLAC) fold into a zinc finger. The ATP-cone domain maps to 49–139 (PRIIKRDGSR…VYLSFEDISE (91 aa)).

It belongs to the NrdR family. Requires Zn(2+) as cofactor.

Its function is as follows. Negatively regulates transcription of bacterial ribonucleotide reductase nrd genes and operons by binding to NrdR-boxes. This chain is Transcriptional repressor NrdR, found in Colwellia psychrerythraea (strain 34H / ATCC BAA-681) (Vibrio psychroerythus).